Reading from the N-terminus, the 535-residue chain is F-box protein At1g56610 (535 aa).

Helical transmembrane passes span phenylalanine 3 to isoleucine 23, valine 37 to phenylalanine 57, and leucine 82 to phenylalanine 102. Positions threonine 73–phenylalanine 119 constitute an F-box; degenerate domain.

In terms of assembly, part of a SCF (ASK-cullin-F-box) protein ligase complex. Interacts with ASK4.

Its subcellular location is the membrane. The protein operates within protein modification; protein ubiquitination. Component of SCF(ASK-cullin-F-box) E3 ubiquitin ligase complexes, which may mediate the ubiquitination and subsequent proteasomal degradation of target proteins. This Arabidopsis thaliana (Mouse-ear cress) protein is F-box protein At1g56610.